We begin with the raw amino-acid sequence, 456 residues long: Solute carrier family 38 member 6 (456 aa).

At Met1 the chain carries N-acetylmethionine. Residues Ser4 and Ser7 each carry the phosphoserine modification. 5 helical membrane passes run 42–62 (SPGV…MGSG), 85–105 (VALL…QTAV), 111–131 (LGLF…IIIQ), 170–190 (LLII…KIGF), and 191–211 (LGYT…VVII). Cys218 and Cys238 are disulfide-bonded. The N-linked (GlcNAc...) asparagine glycan is linked to Asn233. A helical membrane pass occupies residues 250-270 (AYALPTMAFSFLCHTSILPIY). Asn283 carries N-linked (GlcNAc...) asparagine glycosylation. The next 5 membrane-spanning stretches (helical) occupy residues 288–308 (AIAL…LTFY), 327–347 (VVVM…VPLI), 371–391 (FLIT…VPDI), 394–414 (VFGV…PGLF), and 431–451 (AFVL…LIIF).

It belongs to the amino acid/polyamine transporter 2 family.

Its subcellular location is the cell membrane. It is found in the synapse. The catalysed reaction is L-glutamine(out) = L-glutamine(in). The enzyme catalyses L-glutamate(out) = L-glutamate(in). Functionally, amino acid transporter with an apparent selectivity for L-glutamine and L-glutamate. May facilitate glutamine uptake in excitatory neurons. The transport mechanism remains to be elucidated. This Homo sapiens (Human) protein is Solute carrier family 38 member 6.